The following is a 920-amino-acid chain: Sensor histidine kinase SsrA (920 aa).

Residues 1–19 (MNLLNLKNTLQTSLVIRLT) are Cytoplasmic-facing. A helical transmembrane segment spans residues 20 to 40 (FLFLLTTIIIWLLSVLTAAYI). The Periplasmic portion of the chain corresponds to 41 to 291 (SMVQKRQHII…YGNLHNRILK (251 aa)). The chain crosses the membrane as a helical span at residues 292-312 (IILQQIPFTLTALVLMTSAFC). Residues 313–920 (WLLHRSLAKP…RMIFKNYTIT (608 aa)) lie on the Cytoplasmic side of the membrane. One can recognise an HAMP domain in the interval 317-369 (RSLAKPLWRFVDVINKTATAPLSTRLPAQRLDELDSIAGAFNQLLDTLQVQYD). Positions 354-395 (AGAFNQLLDTLQVQYDNLENKVAERTQALNEAKKRAERANKR) form a coiled coil. The 213-residue stretch at 402–614 (VISHELRTPM…CVSLVLPLQE (213 aa)) folds into the Histidine kinase domain. 2 residues coordinate ATP: H405 and D549. H405 is subject to Phosphohistidine; by autocatalysis. The Response regulatory domain maps to 690 to 808 (QILLVDDADI…TLARYISIAA (119 aa)). D739 bears the 4-aspartylphosphate mark.

Post-translationally, autophosphorylated.

The protein resides in the cell inner membrane. The enzyme catalyses ATP + protein L-histidine = ADP + protein N-phospho-L-histidine.. Member of the two-component regulatory system SsrA/SsrB (SpiR/SsrB) that is required for intracellular proliferation and systemic dissemination within the host. When inside acidic Salmonella-containing vesicles (SCV) within host cells the SsrA sensor kinase autophosphorylates and the phosphoryl group is transferred to the response regulator SsrB; phosphorylated SsrB activates the expression of genes encoding virulence proteins, including pathogenicity island 2 (SPI2) and other horizontally acquired genes, and antagonizes the action of transcriptional repressor hns (H-NS). The protein is Sensor histidine kinase SsrA of Salmonella typhimurium (strain LT2 / SGSC1412 / ATCC 700720).